A 306-amino-acid polypeptide reads, in one-letter code: UDP-3-O-acyl-N-acetylglucosamine deacetylase (306 aa).

Positions 79, 238, and 242 each coordinate Zn(2+). Catalysis depends on H265, which acts as the Proton donor.

The protein belongs to the LpxC family. The cofactor is Zn(2+).

It carries out the reaction a UDP-3-O-[(3R)-3-hydroxyacyl]-N-acetyl-alpha-D-glucosamine + H2O = a UDP-3-O-[(3R)-3-hydroxyacyl]-alpha-D-glucosamine + acetate. Its pathway is glycolipid biosynthesis; lipid IV(A) biosynthesis; lipid IV(A) from (3R)-3-hydroxytetradecanoyl-[acyl-carrier-protein] and UDP-N-acetyl-alpha-D-glucosamine: step 2/6. Catalyzes the hydrolysis of UDP-3-O-myristoyl-N-acetylglucosamine to form UDP-3-O-myristoylglucosamine and acetate, the committed step in lipid A biosynthesis. In Shewanella baltica (strain OS223), this protein is UDP-3-O-acyl-N-acetylglucosamine deacetylase.